Consider the following 342-residue polypeptide: tRNA dimethylallyltransferase (342 aa).

39–46 serves as a coordination point for ATP; it reads GPTGSGKT. 41-46 is a substrate binding site; the sequence is TGSGKT. An interaction with substrate tRNA region spans residues 64-67; it reads DSMQ.

It belongs to the IPP transferase family. In terms of assembly, monomer. The cofactor is Mg(2+).

The catalysed reaction is adenosine(37) in tRNA + dimethylallyl diphosphate = N(6)-dimethylallyladenosine(37) in tRNA + diphosphate. Functionally, catalyzes the transfer of a dimethylallyl group onto the adenine at position 37 in tRNAs that read codons beginning with uridine, leading to the formation of N6-(dimethylallyl)adenosine (i(6)A). The sequence is that of tRNA dimethylallyltransferase from Chlamydia pneumoniae (Chlamydophila pneumoniae).